A 168-amino-acid chain; its full sequence is Photosystem I assembly protein Ycf3 (168 aa).

TPR repeat units lie at residues 35 to 68, 72 to 105, and 120 to 153; these read AFTYYRDGMSAQSEGNYAEALQNYYEAMRLEIDP, SYILYNIGLIHTSNGEHTKALEYYFRALERNPFL, and GEQAIRQGDSEIAEAWFDQAAEYWKQAIALTPGN.

This sequence belongs to the Ycf3 family.

The protein localises to the plastid. It is found in the chloroplast thylakoid membrane. Essential for the assembly of the photosystem I (PSI) complex. May act as a chaperone-like factor to guide the assembly of the PSI subunits. The sequence is that of Photosystem I assembly protein Ycf3 from Daucus carota (Wild carrot).